A 374-amino-acid chain; its full sequence is RNA ligase 1 (374 aa).

Tyr37, Arg54, and Lys75 together coordinate ATP. The N6-AMP-lysine intermediate role is filled by Lys99. Residues Glu159, Lys240, and Lys242 each coordinate ATP. Residue Asp272 coordinates Mg(2+).

Belongs to the Tequatrovirus RNA ligase 1 family. It depends on Mg(2+) as a cofactor.

The catalysed reaction is ATP + (ribonucleotide)n-3'-hydroxyl + 5'-phospho-(ribonucleotide)m = (ribonucleotide)n+m + AMP + diphosphate.. Involved in countering a host defense mechanism which, following viral infection, activates the host anticodon nuclease and shuts off viral translation. Repairs 5'-PO4 and 3'-OH groups in the cleaved host tRNA. The nick ligation reaction entails three nucleotidyl transfer steps. In the first step, the RNA ligase reacts with ATP in the absence of nucleic acid to form a covalent ligase-AMP intermediate and release pyrophosphate. In step 2, the ligase-AMP binds to the nicked duplex nucleic acid and transfers the adenylate to the 5'-PO4 terminus to form an adenylylated nicked intermediate. In step 3, the RNA ligase directs the attack of the nick 3'-OH on the 5'-phosphoanhydride linkage, resulting in a repaired 3'-5' phosphodiester and release of AMP. This chain is RNA ligase 1 (63), found in Enterobacteria phage T4 (Bacteriophage T4).